The chain runs to 575 residues: Mitochondrial 2-methylisocitrate lyase ICL2 (575 aa).

Cys238 is a catalytic residue.

It belongs to the isocitrate lyase/PEP mutase superfamily. Isocitrate lyase family.

It localises to the mitochondrion matrix. It catalyses the reaction (2S,3R)-3-hydroxybutane-1,2,3-tricarboxylate = pyruvate + succinate. Its pathway is organic acid metabolism; propanoate degradation. Functionally, catalyzes the formation of pyruvate and succinate from 2-methylisocitrate during the metabolism of endogenous propionyl-CoA. Does not act on isocitrate. This is Mitochondrial 2-methylisocitrate lyase ICL2 (ICL2) from Saccharomyces cerevisiae (strain ATCC 204508 / S288c) (Baker's yeast).